We begin with the raw amino-acid sequence, 327 residues long: Biotin synthase (327 aa).

The Radical SAM core domain occupies 52-279 (NAIQRSTLLS…TSWVRLSAGR (228 aa)). Positions 67, 71, and 74 each coordinate [4Fe-4S] cluster. The [2Fe-2S] cluster site is built by cysteine 111, cysteine 142, cysteine 202, and arginine 274.

It belongs to the radical SAM superfamily. Biotin synthase family. As to quaternary structure, homodimer. The cofactor is [4Fe-4S] cluster. Requires [2Fe-2S] cluster as cofactor.

The enzyme catalyses (4R,5S)-dethiobiotin + (sulfur carrier)-SH + 2 reduced [2Fe-2S]-[ferredoxin] + 2 S-adenosyl-L-methionine = (sulfur carrier)-H + biotin + 2 5'-deoxyadenosine + 2 L-methionine + 2 oxidized [2Fe-2S]-[ferredoxin]. Its pathway is cofactor biosynthesis; biotin biosynthesis; biotin from 7,8-diaminononanoate: step 2/2. Catalyzes the conversion of dethiobiotin (DTB) to biotin by the insertion of a sulfur atom into dethiobiotin via a radical-based mechanism. This chain is Biotin synthase, found in Dechloromonas aromatica (strain RCB).